The sequence spans 157 residues: Ribosome maturation factor RimP (157 aa).

It belongs to the RimP family.

It is found in the cytoplasm. In terms of biological role, required for maturation of 30S ribosomal subunits. This Geobacillus kaustophilus (strain HTA426) protein is Ribosome maturation factor RimP.